The chain runs to 573 residues: Diflavin flavoprotein A 1 (573 aa).

The segment at 43–236 (QNGTTYNSYL…GTISTVANGH (194 aa)) is zinc metallo-hydrolase. Fe cation is bound by residues H92, E94, D96, H159, D178, and H236. The Flavodoxin-like domain occupies 265–401 (VVVFYVADYG…LCDESGTDLG (137 aa)). The tract at residues 424-573 (IGRISGGLYI…VHHRKVGNYY (150 aa)) is flavodoxin-reductase-like.

In the N-terminal section; belongs to the zinc metallo-hydrolase group 3 family. The protein in the C-terminal section; belongs to the flavodoxin reductase family. As to quaternary structure, homodimer. Fe cation is required as a cofactor. It depends on FAD as a cofactor. The cofactor is FMN.

Mediates electron transfer from NADH to oxygen, reducing it to water. This modular protein has 3 redox cofactors, in other organisms the same activity requires 2 or 3 proteins. In Synechocystis sp. (strain ATCC 27184 / PCC 6803 / Kazusa), this protein is Diflavin flavoprotein A 1 (dfa1).